Here is a 953-residue protein sequence, read N- to C-terminus: Coatomer subunit beta (953 aa).

An N-acetylthreonine modification is found at threonine 2. HEAT repeat units lie at residues 96–131 (HEMILVCDAYRKDLQHPNEFIRGSTLRFLCKLKEAE), 132–168 (LLEPLMPAIRACLEHRHSYVRRNAVLAIYTIYRNFEH), 240–276 (SERARFIRCIYNLLQSSSPAVKYEAAGTLVTLSSAPT), 277–314 (AIKAAAQCYIDLIIKESDNNVKLIVLDRLIELKEHPAH), 316–353 (RVLQDLVMDILRVLSTPDLEVRKKTLQLALDLVSSRNV), and 396–433 (DMAANVIPVLMEFLSDNNEAAAADVLEFVREAIQRFDN). An N6-acetyllysine modification is found at lysine 494.

As to quaternary structure, oligomeric complex that consists of at least the alpha, beta, beta', gamma, delta, epsilon and zeta subunits. Interacts with SCYL1. Interacts with COPG1. Interacts (via trunk domain) with ARF1 (via switch I region); the interaction is direct. Interacts with KCNK2/TREK (via N-terminus); this interaction increases the channel-mediated whole cell currents and promotes plasma membrane expression of KCNK2/TREK. Interacts with anthrax lethal factor (LF); this interaction may facilitate endosomal vesicle membrane translocation of LF and its release from the lumen of endosomal vesicles to external milieu. Interacts with CAPN8 and PRKCE. Interacts with ARF1 (myristoylated); this interaction is required for binding of COPB1 to Golgi membranes. Interacts with STX17. Interacts with TMEM115. Interacts with HLA-G-B2M complex; this interaction mediates the endoplasmic reticulum (ER) retrieval of HLA-E-B2M complexes that bind low affinity peptides. Interacts with TMEM41B. In terms of assembly, (Microbial infection) Interacts (via C-terminus) with HIV-1 Nef; the interaction is direct. Post-translationally, proteolytically cleaved between Ser-528 and Ser-529 by CAPN8.

It is found in the cytoplasm. It localises to the golgi apparatus membrane. Its subcellular location is the cytoplasmic vesicle. The protein localises to the COPI-coated vesicle membrane. The protein resides in the cell membrane. It is found in the endoplasmic reticulum-Golgi intermediate compartment. Functionally, the coatomer is a cytosolic protein complex that binds to dilysine motifs and reversibly associates with Golgi non-clathrin-coated vesicles, which further mediate biosynthetic protein transport from the ER, via the Golgi up to the trans Golgi network. Coatomer complex is required for budding from Golgi membranes, and is essential for the retrograde Golgi-to-ER transport of dilysine-tagged proteins. In mammals, the coatomer can only be recruited by membranes associated to ADP-ribosylation factors (ARFs), which are small GTP-binding proteins; the complex also influences the Golgi structural integrity, as well as the processing, activity, and endocytic recycling of LDL receptors. Plays a functional role in facilitating the transport of kappa-type opioid receptor mRNAs into axons and enhances translation of these proteins. Required for limiting lipid storage in lipid droplets. Involved in lipid homeostasis by regulating the presence of perilipin family members PLIN2 and PLIN3 at the lipid droplet surface and promoting the association of adipocyte surface triglyceride lipase (PNPLA2) with the lipid droplet to mediate lipolysis. Involved in the Golgi disassembly and reassembly processes during cell cycle. Involved in autophagy by playing a role in early endosome function. Plays a role in organellar compartmentalization of secretory compartments including endoplasmic reticulum (ER)-Golgi intermediate compartment (ERGIC), Golgi, trans-Golgi network (TGN) and recycling endosomes, and in biosynthetic transport of CAV1. Promotes degradation of Nef cellular targets CD4 and MHC class I antigens by facilitating their trafficking to degradative compartments. This Homo sapiens (Human) protein is Coatomer subunit beta.